A 112-amino-acid polypeptide reads, in one-letter code: Nitrogen regulatory protein GlnK1 (112 aa).

Residue Thr-29 coordinates ADP. Positions 29 and 38 each coordinate ATP. 2-oxoglutarate is bound at residue 52 to 54 (IVD). ADP is bound by residues Val-64, 88–90 (DGK), and 101–103 (RVR). Residues Val-64, 86-90 (PGDGK), and 101-103 (RVR) contribute to the ATP site.

This sequence belongs to the P(II) protein family. In terms of assembly, homotrimer. Interacts and forms a complex with Amt1.

It localises to the cytoplasm. With respect to regulation, formation of the GlnK1/Amt1 complex is decreased in the presence of Mg-ATP or 2-oxoglutarate. The presence of both effectors abolishes the formation of the complex. In terms of biological role, involved in the regulation of nitrogen metabolism. Regulates the activity of its targets by protein-protein interaction in response to the nitrogen status of the cell. Regulates the activity of the ammonia channel Amt1 via direct interaction. The protein is Nitrogen regulatory protein GlnK1 of Methanocaldococcus jannaschii (strain ATCC 43067 / DSM 2661 / JAL-1 / JCM 10045 / NBRC 100440) (Methanococcus jannaschii).